The chain runs to 746 residues: NAD(P)H-quinone oxidoreductase subunit 5, chloroplastic (746 aa).

The next 16 helical transmembrane spans lie at 9–29, 40–60, 89–109, 121–140, 147–167, 185–205, 219–239, 258–278, 280–300, 327–347, 354–374, 396–416, 425–445, 552–572, 606–626, and 726–746; these read WIIPFIPLPVPILIGVGLLLF, WAFPSIFLLTIVMIFSIDLSI, IDSLTSIMSILITTVGILVLI, YLRFFTYMSFFNTSMLGLVT, VYIFWELVGMCSYLLIGFWFT, GDFGLLLGILGFYWITGSLEF, NEVNILFVTLCALLLFCGSVA, TPISALIHAATMVAAGIFLVA, LLPLFIVIPSIMSGIALIGII, LGYMMLALGMGSYRAALFHLI, ALLFLGSGSIIHSMEAIVGYS, MSFLIGTLSLCGIPPFACFWS, WLYSPIFAIIACSTAGLTAFY, LFSMLVLVLFTFFVGSIGISF, FFINATFSVSIAFFGLFIASF, and SYIFFFVLIFLLICYYIYLFP.

It belongs to the complex I subunit 5 family. NDH is composed of at least 16 different subunits, 5 of which are encoded in the nucleus.

It is found in the plastid. Its subcellular location is the chloroplast thylakoid membrane. The catalysed reaction is a plastoquinone + NADH + (n+1) H(+)(in) = a plastoquinol + NAD(+) + n H(+)(out). The enzyme catalyses a plastoquinone + NADPH + (n+1) H(+)(in) = a plastoquinol + NADP(+) + n H(+)(out). Its function is as follows. NDH shuttles electrons from NAD(P)H:plastoquinone, via FMN and iron-sulfur (Fe-S) centers, to quinones in the photosynthetic chain and possibly in a chloroplast respiratory chain. The immediate electron acceptor for the enzyme in this species is believed to be plastoquinone. Couples the redox reaction to proton translocation, and thus conserves the redox energy in a proton gradient. This is NAD(P)H-quinone oxidoreductase subunit 5, chloroplastic (ndhF) from Vicia faba (Broad bean).